A 387-amino-acid polypeptide reads, in one-letter code: tRNA N6-adenosine threonylcarbamoyltransferase (387 aa).

Fe cation-binding residues include H112 and H116. Residues 134–138, D167, G180, and N325 each bind substrate; that span reads LASGG. D353 is a binding site for Fe cation.

It belongs to the KAE1 / TsaD family. Requires Fe(2+) as cofactor.

The protein resides in the cytoplasm. It carries out the reaction L-threonylcarbamoyladenylate + adenosine(37) in tRNA = N(6)-L-threonylcarbamoyladenosine(37) in tRNA + AMP + H(+). Required for the formation of a threonylcarbamoyl group on adenosine at position 37 (t(6)A37) in tRNAs that read codons beginning with adenine. Is involved in the transfer of the threonylcarbamoyl moiety of threonylcarbamoyl-AMP (TC-AMP) to the N6 group of A37, together with TsaE and TsaB. TsaD likely plays a direct catalytic role in this reaction. The polypeptide is tRNA N6-adenosine threonylcarbamoyltransferase (Rickettsia prowazekii (strain Madrid E)).